The primary structure comprises 298 residues: GTP cyclohydrolase FolE2 (298 aa).

It belongs to the GTP cyclohydrolase IV family.

The catalysed reaction is GTP + H2O = 7,8-dihydroneopterin 3'-triphosphate + formate + H(+). The protein operates within cofactor biosynthesis; 7,8-dihydroneopterin triphosphate biosynthesis; 7,8-dihydroneopterin triphosphate from GTP: step 1/1. Its function is as follows. Converts GTP to 7,8-dihydroneopterin triphosphate. This Neisseria meningitidis serogroup B (strain ATCC BAA-335 / MC58) protein is GTP cyclohydrolase FolE2.